The primary structure comprises 594 residues: Glutamate decarboxylase 1 (594 aa).

The span at 1-13 shows a compositional bias: low complexity; that stretch reads MASSTPSSSATSS. Positions 1–23 are disordered; that stretch reads MASSTPSSSATSSNAGADPNTTN. Serine 78 is modified (phosphoserine). 190-192 serves as a coordination point for 4-aminobutanoate; sequence QLS. Position 405 is an N6-(pyridoxal phosphate)lysine (lysine 405). 4-aminobutanoate is bound at residue arginine 567.

This sequence belongs to the group II decarboxylase family. Homodimer. Pyridoxal 5'-phosphate is required as a cofactor.

It catalyses the reaction L-glutamate + H(+) = 4-aminobutanoate + CO2. Catalyzes the synthesis of the inhibitory neurotransmitter gamma-aminobutyric acid (GABA) with pyridoxal 5'-phosphate as cofactor. In Pongo abelii (Sumatran orangutan), this protein is Glutamate decarboxylase 1 (GAD1).